The chain runs to 391 residues: Succinate--CoA ligase [ADP-forming] subunit beta (391 aa).

Residues 9–237 enclose the ATP-grasp domain; the sequence is RDLFEKHGVP…RATTDPLELR (229 aa). Residues Lys46, 53–55, Ala95, and Glu100 each bind ATP; that span reads GRG. Mg(2+) is bound by residues Asn192 and Asp206. Substrate contacts are provided by residues Asn257 and 320–322; that span reads GIT.

It belongs to the succinate/malate CoA ligase beta subunit family. Heterotetramer of two alpha and two beta subunits. The cofactor is Mg(2+).

The catalysed reaction is succinate + ATP + CoA = succinyl-CoA + ADP + phosphate. It carries out the reaction GTP + succinate + CoA = succinyl-CoA + GDP + phosphate. Its pathway is carbohydrate metabolism; tricarboxylic acid cycle; succinate from succinyl-CoA (ligase route): step 1/1. Its function is as follows. Succinyl-CoA synthetase functions in the citric acid cycle (TCA), coupling the hydrolysis of succinyl-CoA to the synthesis of either ATP or GTP and thus represents the only step of substrate-level phosphorylation in the TCA. The beta subunit provides nucleotide specificity of the enzyme and binds the substrate succinate, while the binding sites for coenzyme A and phosphate are found in the alpha subunit. The sequence is that of Succinate--CoA ligase [ADP-forming] subunit beta from Cutibacterium acnes (strain DSM 16379 / KPA171202) (Propionibacterium acnes).